The chain runs to 881 residues: Probable intermembrane transport protein HI_1672 (881 aa).

The chain crosses the membrane as a helical span at residues 30–49 (FWLLPFIALCIGAILFFQIV).

The protein belongs to the PqiB family.

It localises to the cell inner membrane. This is Probable intermembrane transport protein HI_1672 from Haemophilus influenzae (strain ATCC 51907 / DSM 11121 / KW20 / Rd).